The sequence spans 164 residues: uncharacterized protein (164 aa).

This is an uncharacterized protein from Mycobacterium tuberculosis (strain CDC 1551 / Oshkosh).